Here is a 435-residue protein sequence, read N- to C-terminus: Zinc finger CCCH domain-containing protein 17 (435 aa).

Disordered stretches follow at residues 1–30 and 58–107; these read MDIE…SSTS and TAKR…GPRH. The C3H1-type 1 zinc finger occupies 28–54; that stretch reads STSGKVCIHWRAGRCNRFPCPYLHSEL. Residues 77-103 show a composition bias toward gly residues; it reads SGGGGGRGAGGAGGPNKWGRGPGGADG. The C3H1-type 2 zinc finger occupies 108–135; it reads KVPDRPCRYFLAGDCSYGEKCRYPHSYS. WD repeat units lie at residues 148–189, 191–225, 227–264, 271–308, 311–348, 355–395, and 397–435; these read GHEK…GVIN, GREI…EMNL, GPTG…NGFE, GHQL…CIQT, DHTG…SLEV, EHGA…DRGR, and FSKQ…SQTK.

The protein is Zinc finger CCCH domain-containing protein 17 of Oryza sativa subsp. japonica (Rice).